Reading from the N-terminus, the 101-residue chain is Large ribosomal subunit protein uL24 (101 aa).

This sequence belongs to the universal ribosomal protein uL24 family. As to quaternary structure, part of the 50S ribosomal subunit.

One of two assembly initiator proteins, it binds directly to the 5'-end of the 23S rRNA, where it nucleates assembly of the 50S subunit. Its function is as follows. One of the proteins that surrounds the polypeptide exit tunnel on the outside of the subunit. The sequence is that of Large ribosomal subunit protein uL24 from Streptococcus thermophilus (strain ATCC BAA-491 / LMD-9).